The sequence spans 84 residues: Exodeoxyribonuclease 7 small subunit (84 aa).

Belongs to the XseB family. Heterooligomer composed of large and small subunits.

The protein resides in the cytoplasm. The enzyme catalyses Exonucleolytic cleavage in either 5'- to 3'- or 3'- to 5'-direction to yield nucleoside 5'-phosphates.. Its function is as follows. Bidirectionally degrades single-stranded DNA into large acid-insoluble oligonucleotides, which are then degraded further into small acid-soluble oligonucleotides. The polypeptide is Exodeoxyribonuclease 7 small subunit (Janthinobacterium sp. (strain Marseille) (Minibacterium massiliensis)).